The following is a 204-amino-acid chain: Large ribosomal subunit protein eL15B (204 aa).

A disordered region spans residues 165–185 (TATGKKSRGINKGHKFNNTKA). The span at 169 to 185 (KKSRGINKGHKFNNTKA) shows a compositional bias: basic residues.

This sequence belongs to the eukaryotic ribosomal protein eL15 family. As to quaternary structure, component of the large ribosomal subunit (LSU). Mature yeast ribosomes consist of a small (40S) and a large (60S) subunit. The 40S small subunit contains 1 molecule of ribosomal RNA (18S rRNA) and 33 different proteins (encoded by 57 genes). The large 60S subunit contains 3 rRNA molecules (25S, 5.8S and 5S rRNA) and 46 different proteins (encoded by 81 genes).

Its subcellular location is the cytoplasm. Functionally, component of the ribosome, a large ribonucleoprotein complex responsible for the synthesis of proteins in the cell. The small ribosomal subunit (SSU) binds messenger RNAs (mRNAs) and translates the encoded message by selecting cognate aminoacyl-transfer RNA (tRNA) molecules. The large subunit (LSU) contains the ribosomal catalytic site termed the peptidyl transferase center (PTC), which catalyzes the formation of peptide bonds, thereby polymerizing the amino acids delivered by tRNAs into a polypeptide chain. The nascent polypeptides leave the ribosome through a tunnel in the LSU and interact with protein factors that function in enzymatic processing, targeting, and the membrane insertion of nascent chains at the exit of the ribosomal tunnel. The chain is Large ribosomal subunit protein eL15B from Saccharomyces cerevisiae (strain ATCC 204508 / S288c) (Baker's yeast).